A 249-amino-acid chain; its full sequence is Vesicle-associated membrane protein-associated protein A (249 aa).

N-acetylalanine is present on A2. Topologically, residues 2 to 227 are cytoplasmic; sequence ASASGAMAKH…ASFRDNVTSP (226 aa). The MSP domain maps to 14–131; sequence ILVLDPPTDL…MDSKLRCVFE (118 aa). The tract at residues 50 to 53 is phosphorylated FFAT motif binding; sequence KVKT. N6-acetyllysine is present on K125. Residues 135 to 144 show a composition bias toward basic and acidic residues; it reads ENDKLNDMEP. The interval 135 to 167 is disordered; that stretch reads ENDKLNDMEPSKAVPLNASKQDGPMPKPHSVSL. A Phosphoserine modification is found at S166. The stretch at 169–205 forms a coiled coil; sequence DTETRKLMEECKRLQGEMMKLSEENRHLRDEGLRLRK. The residue at position 170 (T170) is a Phosphothreonine. Residues S214, S216, and S219 each carry the phosphoserine modification. Residues 228-248 form a helical; Anchor for type IV membrane protein membrane-spanning segment; the sequence is LPSLLVVIAAIFIGFFLGKFI.

This sequence belongs to the VAMP-associated protein (VAP) (TC 9.B.17) family. As to quaternary structure, homodimer; disulfide-linked. Heterodimer with VAPB. Interacts with VAMP1, VAMP2, STX1A, BET1, SEC22C and with the C-terminal domain of OCLN. Interacts (via MSP domain) with OSBPL1A (via FFAT motif). Interacts (via MSP domain) with ZFYVE27; may retain ZFYVE27 in the endoplasmic reticulum and regulate its function in cell projections formation. Interacts with OSBP. Interacts (via C-terminus) with RSAD2/viperin (via C-terminus). Interacts with IFITM3. Interacts with OSBPL3 (phosphorylated form). Interacts with KIF5A in a ZFYVE27-dependent manner. Interacts (via MSP domain) with STARD3 (via phosphorylated FFAT motif); this interaction recruits VAPA to the endosome. Interacts with STARD3NL (via FFAT motif). Interacts with CERT1. Interacts with PLEKHA3 and SACM1L to form a ternary complex. Interacts with VPS13A (via FFAT motif). Interacts with RB1CC1 (via phosphorylated FFAT motif), MIGA2 (via phosphorylated FFAT motif), RMDN3 (via phosphorylated FFAT motif), KCNB1 (via phosphorylated FFAT motif) and KCNB2 (via phosphorylated FFAT motif). Interacts (via MSP domain) with WDR44 (via FFAT-like motif); the interactions connect the endoplasmic reticulum (ER) with the endosomal tubule. In terms of assembly, (Microbial infection) Interacts with HCV protein NS5A and NS5B. In terms of tissue distribution, ubiquitous.

The protein resides in the endoplasmic reticulum membrane. It localises to the cell membrane. Its subcellular location is the cell junction. The protein localises to the tight junction. It is found in the nucleus membrane. Functionally, endoplasmic reticulum (ER)-anchored protein that mediates the formation of contact sites between the ER and endosomes via interaction with FFAT motif-containing proteins such as STARD3 or WDR44. STARD3-VAPA interaction enables cholesterol transfer from the ER to endosomes. Via interaction with WDR44 participates in neosynthesized protein export. In addition, recruited to the plasma membrane through OSBPL3 binding. The OSBPL3-VAPA complex stimulates RRAS signaling which in turn attenuates integrin beta-1 (ITGB1) activation at the cell surface. With OSBPL3, may regulate ER morphology. May play a role in vesicle trafficking. The sequence is that of Vesicle-associated membrane protein-associated protein A from Homo sapiens (Human).